The chain runs to 431 residues: Adenylosuccinate synthetase (431 aa).

Residues 13–19 (GDEGKGK) and 41–43 (GHT) contribute to the GTP site. Residue Asp14 is the Proton acceptor of the active site. Asp14 and Gly41 together coordinate Mg(2+). IMP is bound by residues 14 to 17 (DEGK), 39 to 42 (NAGH), Thr130, Arg144, Gln225, Thr240, and Arg304. His42 functions as the Proton donor in the catalytic mechanism. Substrate is bound at residue 300–306 (ATTGRKR). GTP contacts are provided by residues Arg306, 332–334 (KLD), and 415–417 (STG).

Belongs to the adenylosuccinate synthetase family. In terms of assembly, homodimer. Requires Mg(2+) as cofactor.

It localises to the cytoplasm. It catalyses the reaction IMP + L-aspartate + GTP = N(6)-(1,2-dicarboxyethyl)-AMP + GDP + phosphate + 2 H(+). The protein operates within purine metabolism; AMP biosynthesis via de novo pathway; AMP from IMP: step 1/2. Plays an important role in the de novo pathway of purine nucleotide biosynthesis. Catalyzes the first committed step in the biosynthesis of AMP from IMP. The protein is Adenylosuccinate synthetase of Shewanella oneidensis (strain ATCC 700550 / JCM 31522 / CIP 106686 / LMG 19005 / NCIMB 14063 / MR-1).